Consider the following 105-residue polypeptide: uncharacterized protein (105 aa).

This is an uncharacterized protein from Bacillus phage SPbeta (Bacillus phage SPBc2).